We begin with the raw amino-acid sequence, 416 residues long: uncharacterized protein (416 aa).

This is an uncharacterized protein from Methanocaldococcus jannaschii (strain ATCC 43067 / DSM 2661 / JAL-1 / JCM 10045 / NBRC 100440) (Methanococcus jannaschii).